A 102-amino-acid chain; its full sequence is NADH-quinone oxidoreductase subunit K (102 aa).

The next 3 helical transmembrane spans lie at leucine 5–leucine 25, isoleucine 31–phenylalanine 51, and phenylalanine 66–phenylalanine 86.

It belongs to the complex I subunit 4L family. NDH-1 is composed of 14 different subunits. Subunits NuoA, H, J, K, L, M, N constitute the membrane sector of the complex.

Its subcellular location is the cell inner membrane. It catalyses the reaction a quinone + NADH + 5 H(+)(in) = a quinol + NAD(+) + 4 H(+)(out). Its function is as follows. NDH-1 shuttles electrons from NADH, via FMN and iron-sulfur (Fe-S) centers, to quinones in the respiratory chain. The immediate electron acceptor for the enzyme in this species is believed to be ubiquinone. Couples the redox reaction to proton translocation (for every two electrons transferred, four hydrogen ions are translocated across the cytoplasmic membrane), and thus conserves the redox energy in a proton gradient. The chain is NADH-quinone oxidoreductase subunit K from Parvibaculum lavamentivorans (strain DS-1 / DSM 13023 / NCIMB 13966).